Reading from the N-terminus, the 86-residue chain is Small ribosomal subunit protein bS16 (86 aa).

This sequence belongs to the bacterial ribosomal protein bS16 family.

The chain is Small ribosomal subunit protein bS16 from Borrelia garinii subsp. bavariensis (strain ATCC BAA-2496 / DSM 23469 / PBi) (Borreliella bavariensis).